We begin with the raw amino-acid sequence, 318 residues long: MRIKATVERLPGGMMLVPLLLGALCHTLWPQAGSTLGSFSNGLISGTVPILAVWFFCMGATIQLRASGRVLRRSGSLVLTKIAVAWLVAVVCAPLLPIGGIPSGPLTGLSVLALVAAMDMTNGGLYAALMQQYGSSEDAGAVVLMSLESGPLISMLILGASGLATFEPQLFVGAVLPLLLGFALGNLDAQLRQFFAQATQTLVPFFGFALGNTLDLSTIVHTGASGVLLGVAVIVITGLPLLLADRWLGGGDGTAGVAASSTAGAAVATPALIAGMAPQFAPAAPAATALVASAVIVTSVLVPLLTALQAGRSRQRIG.

10 consecutive transmembrane segments (helical) span residues 10–30 (LPGG…TLWP), 42–62 (GLIS…GATI), 82–102 (IAVA…GGIP), 109–129 (LSVL…YAAL), 139–159 (AGAV…LILG), 163–183 (LATF…LGFA), 201–221 (TLVP…TIVH), 224–244 (ASGV…LLLA), 257–277 (VAAS…AGMA), and 288–308 (TALV…LTAL).

Belongs to the KdgT transporter family.

The protein localises to the cell inner membrane. It catalyses the reaction 2-dehydro-3-deoxy-D-gluconate(in) + H(+)(in) = 2-dehydro-3-deoxy-D-gluconate(out) + H(+)(out). Its function is as follows. Catalyzes the proton-dependent uptake of 2-keto-3-deoxygluconate (KDG) into the cell. The chain is 2-keto-3-deoxygluconate permease from Xanthomonas oryzae pv. oryzae (strain MAFF 311018).